The sequence spans 21 residues: Nigrocin-2GRb (21 aa).

As to expression, expressed by the skin glands.

It localises to the secreted. Its function is as follows. Antimicrobial peptide active against the Gram-positive bacterium S.aureus (MIC=12.5 uM) and against the Gram-negative bacteria E.coli (MIC=3 uM). Has antifungal activity against C.albicans (MIC=50 uM). Has some hemolytic activity against human erythrocytes (LC(50)=40 uM). The chain is Nigrocin-2GRb from Odorrana grahami (Yunnanfu frog).